A 385-amino-acid chain; its full sequence is Putative 8-amino-7-oxononanoate synthase (385 aa).

Arg22 is a substrate binding site. Position 109–110 (109–110 (GY)) interacts with pyridoxal 5'-phosphate. Residue His134 participates in substrate binding. Pyridoxal 5'-phosphate contacts are provided by residues Ser182, 207-210 (DEAH), and 238-241 (TLSK). N6-(pyridoxal phosphate)lysine is present on Lys241. Residue Thr353 participates in substrate binding.

This sequence belongs to the class-II pyridoxal-phosphate-dependent aminotransferase family. BioF subfamily. Homodimer. Pyridoxal 5'-phosphate serves as cofactor.

It carries out the reaction 6-carboxyhexanoyl-[ACP] + L-alanine + H(+) = (8S)-8-amino-7-oxononanoate + holo-[ACP] + CO2. It participates in cofactor biosynthesis; biotin biosynthesis. Functionally, catalyzes the decarboxylative condensation of pimeloyl-[acyl-carrier protein] and L-alanine to produce 8-amino-7-oxononanoate (AON), [acyl-carrier protein], and carbon dioxide. The polypeptide is Putative 8-amino-7-oxononanoate synthase (bioF) (Microcystis aeruginosa (strain NIES-843 / IAM M-2473)).